The following is a 383-amino-acid chain: 8-amino-7-oxononanoate synthase (383 aa).

Arginine 21 serves as a coordination point for substrate. Residue 108–109 (GY) coordinates pyridoxal 5'-phosphate. Histidine 133 serves as a coordination point for substrate. Pyridoxal 5'-phosphate-binding residues include serine 179, histidine 207, and threonine 233. The residue at position 236 (lysine 236) is an N6-(pyridoxal phosphate)lysine. Residue threonine 350 participates in substrate binding.

The protein belongs to the class-II pyridoxal-phosphate-dependent aminotransferase family. BioF subfamily. Homodimer. Pyridoxal 5'-phosphate is required as a cofactor.

It carries out the reaction 6-carboxyhexanoyl-[ACP] + L-alanine + H(+) = (8S)-8-amino-7-oxononanoate + holo-[ACP] + CO2. It participates in cofactor biosynthesis; biotin biosynthesis. Its function is as follows. Catalyzes the decarboxylative condensation of pimeloyl-[acyl-carrier protein] and L-alanine to produce 8-amino-7-oxononanoate (AON), [acyl-carrier protein], and carbon dioxide. In Photorhabdus laumondii subsp. laumondii (strain DSM 15139 / CIP 105565 / TT01) (Photorhabdus luminescens subsp. laumondii), this protein is 8-amino-7-oxononanoate synthase.